A 352-amino-acid polypeptide reads, in one-letter code: Histidine biosynthesis bifunctional protein HisB (352 aa).

The segment at 1–164 (MSQKILFIDR…EIENEILSSF (164 aa)) is histidinol-phosphatase. D9 acts as the Nucleophile in catalysis. Mg(2+) contacts are provided by D9 and D11. The Proton donor role is filled by D11. Zn(2+)-binding residues include C93, H95, C101, and C103. D130 is a Mg(2+) binding site. Positions 165 to 352 (RSASYQRTTK…ENLASSKGVI (188 aa)) are imidazoleglycerol-phosphate dehydratase.

It in the N-terminal section; belongs to the histidinol-phosphatase family. In the C-terminal section; belongs to the imidazoleglycerol-phosphate dehydratase family. It depends on Mg(2+) as a cofactor. Zn(2+) is required as a cofactor.

The protein localises to the cytoplasm. The enzyme catalyses D-erythro-1-(imidazol-4-yl)glycerol 3-phosphate = 3-(imidazol-4-yl)-2-oxopropyl phosphate + H2O. It catalyses the reaction L-histidinol phosphate + H2O = L-histidinol + phosphate. Its pathway is amino-acid biosynthesis; L-histidine biosynthesis; L-histidine from 5-phospho-alpha-D-ribose 1-diphosphate: step 6/9. It functions in the pathway amino-acid biosynthesis; L-histidine biosynthesis; L-histidine from 5-phospho-alpha-D-ribose 1-diphosphate: step 8/9. The chain is Histidine biosynthesis bifunctional protein HisB from Campylobacter jejuni subsp. jejuni serotype O:23/36 (strain 81-176).